Consider the following 307-residue polypeptide: Furaquinocin biosynthesis prenyltransferase (307 aa).

It belongs to the aromatic prenyltransferase family. Monomer.

It catalyses the reaction 2-O,3-dimethylflaviolin + (2E)-geranyl diphosphate = 6-linalyl-2-O,3-dimethylflaviolin + diphosphate. The catalysed reaction is 2-O,3-dimethylflaviolin + (2E)-geranyl diphosphate + H(+) = 7-O-geranyl-2-O,3-dimethylflaviolin + diphosphate. With respect to regulation, does not require any metal cations for activity. Functionally, involved in the biosynthesis of furaquinocin. Catalyzes the transfer of a geranyl group to 2-methoxy-3-methyl-flaviolin to yield 6-prenyl-2-methoxy-3-methyl-flaviolin and 7-O-geranyl-2-methoxy-3-methyl-flaviolin in a 10:1 ratio. Can also use other substrates such as flaviolin or 1,3-dihydroxy naphthalene, and can also use DMAPP as prenyl donor. This Streptomyces sp. (strain KO-3988) protein is Furaquinocin biosynthesis prenyltransferase.